A 137-amino-acid polypeptide reads, in one-letter code: NADH-quinone oxidoreductase subunit A 2 (137 aa).

Helical transmembrane passes span 12-32 (WGFA…LGVS), 66-86 (FYLV…LFAW), and 95-115 (WAGL…LVYL).

The protein belongs to the complex I subunit 3 family. NDH-1 is composed of 13 different subunits. Subunits NuoA, H, J, K, L, M, N constitute the membrane sector of the complex.

Its subcellular location is the cell inner membrane. The enzyme catalyses a quinone + NADH + 5 H(+)(in) = a quinol + NAD(+) + 4 H(+)(out). In terms of biological role, NDH-1 shuttles electrons from NADH, via FMN and iron-sulfur (Fe-S) centers, to quinones in the respiratory chain. The immediate electron acceptor for the enzyme in this species is believed to be ubiquinone. Couples the redox reaction to proton translocation (for every two electrons transferred, four hydrogen ions are translocated across the cytoplasmic membrane), and thus conserves the redox energy in a proton gradient. The sequence is that of NADH-quinone oxidoreductase subunit A 2 from Pseudomonas aeruginosa (strain ATCC 15692 / DSM 22644 / CIP 104116 / JCM 14847 / LMG 12228 / 1C / PRS 101 / PAO1).